The following is a 228-amino-acid chain: UPF0173 metal-dependent hydrolase BcerKBAB4_4442 (228 aa).

The protein belongs to the UPF0173 family.

In Bacillus mycoides (strain KBAB4) (Bacillus weihenstephanensis), this protein is UPF0173 metal-dependent hydrolase BcerKBAB4_4442.